The following is a 402-amino-acid chain: Phosphoribulokinase, chloroplastic (402 aa).

The transit peptide at 1 to 51 (MAVCTVYTIPTTTHLGSSFNQNNKQVFFNYKRSSSSNNTLFTTRPSYVITC) directs the protein to the chloroplast. A disulfide bridge connects residues C67 and C106.

The protein belongs to the phosphoribulokinase family.

Its subcellular location is the plastid. The protein resides in the chloroplast. The enzyme catalyses D-ribulose 5-phosphate + ATP = D-ribulose 1,5-bisphosphate + ADP + H(+). It functions in the pathway carbohydrate biosynthesis; Calvin cycle. With respect to regulation, light regulated via thioredoxin by reversible oxidation/reduction of sulfhydryl/disulfide groups. The chain is Phosphoribulokinase, chloroplastic from Spinacia oleracea (Spinach).